Reading from the N-terminus, the 131-residue chain is Cell cycle protein GpsB (131 aa).

The stretch at 39-76 (LDGIIRDYEAFTNEIDRLKEENTKLFSRVDELTKQLSV) forms a coiled coil. The disordered stretch occupies residues 111–131 (KLSDSSVDNHDDGNHSDVDQY). The segment covering 117–131 (VDNHDDGNHSDVDQY) has biased composition (basic and acidic residues).

This sequence belongs to the GpsB family. As to quaternary structure, forms polymers through the coiled coil domains. Interacts with PBP1, MreC and EzrA.

It localises to the cytoplasm. Its function is as follows. Divisome component that associates with the complex late in its assembly, after the Z-ring is formed, and is dependent on DivIC and PBP2B for its recruitment to the divisome. Together with EzrA, is a key component of the system that regulates PBP1 localization during cell cycle progression. Its main role could be the removal of PBP1 from the cell pole after pole maturation is completed. Also contributes to the recruitment of PBP1 to the division complex. Not essential for septum formation. This is Cell cycle protein GpsB from Lacticaseibacillus casei (strain BL23) (Lactobacillus casei).